The following is a 196-amino-acid chain: Flagellar transcriptional regulator FlhC (196 aa).

Zn(2+) is bound by residues C138, C141, C158, and C161.

It belongs to the FlhC family. Heterohexamer composed of two FlhC and four FlhD subunits. Each FlhC binds a FlhD dimer, forming a heterotrimer, and a hexamer assembles by dimerization of two heterotrimers. It depends on Zn(2+) as a cofactor.

It is found in the cytoplasm. Functions in complex with FlhD as a master transcriptional regulator that regulates transcription of several flagellar and non-flagellar operons by binding to their promoter region. Activates expression of class 2 flagellar genes, including fliA, which is a flagellum-specific sigma factor that turns on the class 3 genes. Also regulates genes whose products function in a variety of physiological pathways. This is Flagellar transcriptional regulator FlhC from Sodalis glossinidius (strain morsitans).